Here is a 186-residue protein sequence, read N- to C-terminus: Ribosome-recycling factor (186 aa).

This sequence belongs to the RRF family.

It localises to the cytoplasm. Functionally, responsible for the release of ribosomes from messenger RNA at the termination of protein biosynthesis. May increase the efficiency of translation by recycling ribosomes from one round of translation to another. The sequence is that of Ribosome-recycling factor from Rickettsia felis (strain ATCC VR-1525 / URRWXCal2) (Rickettsia azadi).